We begin with the raw amino-acid sequence, 597 residues long: Uptake hydrogenase large subunit (597 aa).

Ni(2+)-binding residues include Cys-75, Cys-78, Cys-576, and Cys-579.

Belongs to the [NiFe]/[NiFeSe] hydrogenase large subunit family. Heterodimer of a large and a small subunit. Ni(2+) serves as cofactor.

It localises to the cell membrane. It catalyses the reaction H2 + A = AH2. In terms of biological role, this enzyme recycles the H(2) produced by nitrogenase to increase the production of ATP and to protect nitrogenase against inhibition or damage by O(2) under carbon- or phosphate-limited conditions. This Rhodobacter capsulatus (Rhodopseudomonas capsulata) protein is Uptake hydrogenase large subunit (hupB).